The chain runs to 316 residues: L-lactate dehydrogenase 3 (316 aa).

Residues Val16, Asp37, Arg42, and Tyr68 each contribute to the NAD(+) site. A substrate-binding site is contributed by Arg91. Residues Ser104, 121 to 123 (ASN), and Thr146 each bind NAD(+). A substrate-binding site is contributed by 123-126 (NPVD). 151–154 (DSSR) provides a ligand contact to substrate. Positions 156 and 171 each coordinate beta-D-fructose 1,6-bisphosphate. His178 acts as the Proton acceptor in catalysis. Thr233 contacts substrate.

The protein belongs to the LDH/MDH superfamily. LDH family. Homotetramer.

Its subcellular location is the cytoplasm. It carries out the reaction (S)-lactate + NAD(+) = pyruvate + NADH + H(+). The protein operates within fermentation; pyruvate fermentation to lactate; (S)-lactate from pyruvate: step 1/1. Allosterically activated by fructose 1,6-bisphosphate (FBP). Functionally, catalyzes the conversion of lactate to pyruvate. This Bacillus cereus (strain ATCC 10987 / NRS 248) protein is L-lactate dehydrogenase 3.